We begin with the raw amino-acid sequence, 102 residues long: Protein translation factor SUI1 homolog (102 aa).

Belongs to the SUI1 family.

This Methanococcus maripaludis (strain C5 / ATCC BAA-1333) protein is Protein translation factor SUI1 homolog.